Here is a 147-residue protein sequence, read N- to C-terminus: Histone H2B (147 aa).

Residues methionine 1–proline 31 are compositionally biased toward basic and acidic residues. A disordered region spans residues methionine 1–lysine 55. 3 positions are modified to N6-acetyllysine: lysine 7, lysine 35, and lysine 36. A Glycyl lysine isopeptide (Lys-Gly) (interchain with G-Cter in ubiquitin) cross-link involves residue lysine 143.

Belongs to the histone H2B family. The nucleosome is a histone octamer containing two molecules each of H2A, H2B, H3 and H4 assembled in one H3-H4 heterotetramer and two H2A-H2B heterodimers. The octamer wraps approximately 147 bp of DNA. In terms of processing, can be acetylated to form H2BK6ac, H2BK33ac and H2BK34ac. Post-translationally, monoubiquitinated to form H2BK143ub1; may give a specific tag for epigenetic transcriptional activation.

The protein localises to the nucleus. It localises to the chromosome. Its function is as follows. Core component of nucleosome. Nucleosomes wrap and compact DNA into chromatin, limiting DNA accessibility to the cellular machineries which require DNA as a template. Histones thereby play a central role in transcription regulation, DNA repair, DNA replication and chromosomal stability. DNA accessibility is regulated via a complex set of post-translational modifications of histones, also called histone code, and nucleosome remodeling. The polypeptide is Histone H2B (HIS2B) (Gossypium hirsutum (Upland cotton)).